Here is a 305-residue protein sequence, read N- to C-terminus: Aspartate carbamoyltransferase catalytic subunit (305 aa).

The carbamoyl phosphate site is built by R54 and T55. K83 serves as a coordination point for L-aspartate. R104, H132, and Q135 together coordinate carbamoyl phosphate. 2 residues coordinate L-aspartate: R165 and R226. 2 residues coordinate carbamoyl phosphate: L265 and P266.

It belongs to the aspartate/ornithine carbamoyltransferase superfamily. ATCase family. Heterooligomer of catalytic and regulatory chains.

It catalyses the reaction carbamoyl phosphate + L-aspartate = N-carbamoyl-L-aspartate + phosphate + H(+). It functions in the pathway pyrimidine metabolism; UMP biosynthesis via de novo pathway; (S)-dihydroorotate from bicarbonate: step 2/3. In terms of biological role, catalyzes the condensation of carbamoyl phosphate and aspartate to form carbamoyl aspartate and inorganic phosphate, the committed step in the de novo pyrimidine nucleotide biosynthesis pathway. The chain is Aspartate carbamoyltransferase catalytic subunit from Pyrobaculum arsenaticum (strain DSM 13514 / JCM 11321 / PZ6).